Reading from the N-terminus, the 286-residue chain is Putative WUSCHEL-related homeobox 2 (286 aa).

Positions 1–25 are disordered; the sequence is MAPAVQQQQSGGGGGSTGAAAVGST. A DNA-binding region (homeobox; WUS-type) is located at residues 23 to 87; sequence GSTTRWCPTP…NHKARDRQKL (65 aa).

The protein belongs to the WUS homeobox family.

It is found in the nucleus. Transcription factor which may be involved in developmental processes. The polypeptide is Putative WUSCHEL-related homeobox 2 (WOX2) (Oryza sativa subsp. japonica (Rice)).